The chain runs to 565 residues: Arginine--tRNA ligase (565 aa).

Positions 121 to 131 (PNIAKPMGMGH) match the 'HIGH' region motif.

This sequence belongs to the class-I aminoacyl-tRNA synthetase family. Monomer.

The protein resides in the cytoplasm. It carries out the reaction tRNA(Arg) + L-arginine + ATP = L-arginyl-tRNA(Arg) + AMP + diphosphate. This chain is Arginine--tRNA ligase, found in Lactobacillus delbrueckii subsp. bulgaricus (strain ATCC BAA-365 / Lb-18).